The primary structure comprises 232 residues: NAD(P)H-quinone oxidoreductase subunit K 1 (232 aa).

[4Fe-4S] cluster-binding residues include C49, C50, C114, and C145.

The protein belongs to the complex I 20 kDa subunit family. NDH-1 can be composed of about 15 different subunits; different subcomplexes with different compositions have been identified which probably have different functions. The cofactor is [4Fe-4S] cluster.

The protein resides in the cellular thylakoid membrane. It catalyses the reaction a plastoquinone + NADH + (n+1) H(+)(in) = a plastoquinol + NAD(+) + n H(+)(out). The enzyme catalyses a plastoquinone + NADPH + (n+1) H(+)(in) = a plastoquinol + NADP(+) + n H(+)(out). In terms of biological role, NDH-1 shuttles electrons from an unknown electron donor, via FMN and iron-sulfur (Fe-S) centers, to quinones in the respiratory and/or the photosynthetic chain. The immediate electron acceptor for the enzyme in this species is believed to be plastoquinone. Couples the redox reaction to proton translocation, and thus conserves the redox energy in a proton gradient. Cyanobacterial NDH-1 also plays a role in inorganic carbon-concentration. In Acaryochloris marina (strain MBIC 11017), this protein is NAD(P)H-quinone oxidoreductase subunit K 1.